We begin with the raw amino-acid sequence, 297 residues long: tRNA pseudouridine synthase A (297 aa).

Catalysis depends on Asp72, which acts as the Nucleophile. Position 144 (Tyr144) interacts with substrate.

This sequence belongs to the tRNA pseudouridine synthase TruA family. In terms of assembly, homodimer.

It catalyses the reaction uridine(38/39/40) in tRNA = pseudouridine(38/39/40) in tRNA. Its function is as follows. Formation of pseudouridine at positions 38, 39 and 40 in the anticodon stem and loop of transfer RNAs. This chain is tRNA pseudouridine synthase A, found in Mycobacterium bovis (strain ATCC BAA-935 / AF2122/97).